A 79-amino-acid polypeptide reads, in one-letter code: Conotoxin Tr6.2 (79 aa).

Residues 1-22 (MKLTCVLIISVLFLTASQLITA) form the signal peptide. The propeptide occupies 23 to 47 (VYSRDKQQYRAARLRDEMRNLKGAR). 3 disulfides stabilise this stretch: C49–C62, C56–C67, and C61–C77. 4-hydroxyproline occurs at positions 60 and 63.

It belongs to the conotoxin O1 superfamily. As to expression, expressed by the venom duct.

It is found in the secreted. Functionally, ion channel inhibitor that inhibits the increase in intracellular calcium upon depolarization in DRG neurons. In vivo, both intraperitoneal and intracranial injections into mice induce hyperactivity. This Conus terebra (Sea snail) protein is Conotoxin Tr6.2.